Reading from the N-terminus, the 163-residue chain is Large ribosomal subunit protein mL59 (163 aa).

The tract at residues 33 to 53 (PAGADPETHKTPYQEESPNPF) is disordered.

The protein belongs to the mitochondrion-specific ribosomal protein mL59 family. Component of the mitochondrial large ribosomal subunit (mt-LSU). Mature N.crassa 74S mitochondrial ribosomes consist of a small (37S) and a large (54S) subunit. The 37S small subunit contains a 16S ribosomal RNA (16S mt-rRNA) and 32 different proteins. The 54S large subunit contains a 23S rRNA (23S mt-rRNA) and 42 different proteins.

It localises to the mitochondrion. Functionally, component of the mitochondrial ribosome (mitoribosome), a dedicated translation machinery responsible for the synthesis of mitochondrial genome-encoded proteins, including at least some of the essential transmembrane subunits of the mitochondrial respiratory chain. The mitoribosomes are attached to the mitochondrial inner membrane and translation products are cotranslationally integrated into the membrane. In Neurospora crassa (strain ATCC 24698 / 74-OR23-1A / CBS 708.71 / DSM 1257 / FGSC 987), this protein is Large ribosomal subunit protein mL59 (mrpl25).